A 403-amino-acid polypeptide reads, in one-letter code: Phosphoglycerate kinase (403 aa).

Substrate is bound by residues 21-23, R36, 59-62, R119, and R159; these read DFN and HLGR. Residues K214, G301, E332, and 359 to 362 contribute to the ATP site; that span reads GGDS.

This sequence belongs to the phosphoglycerate kinase family. Monomer.

The protein resides in the cytoplasm. It carries out the reaction (2R)-3-phosphoglycerate + ATP = (2R)-3-phospho-glyceroyl phosphate + ADP. The protein operates within carbohydrate degradation; glycolysis; pyruvate from D-glyceraldehyde 3-phosphate: step 2/5. The polypeptide is Phosphoglycerate kinase (Lactobacillus johnsonii (strain CNCM I-12250 / La1 / NCC 533)).